Reading from the N-terminus, the 109-residue chain is AVINTFDGVADYLIRYKRLPDNYITKSQASALGWVASKGNLAEVAPGKSIGGDVFSNREGRLPSASGRTWREADINYVSGFRNADRLVYSSDWLIYKTTDHYATFARIR.

The active-site Proton acceptor is Glu-72. The Proton donor role is filled by His-101.

Belongs to the ribonuclease N1/T1 family.

It is found in the secreted. Hydrolyzes phosphodiester bonds in RNA, poly- and oligoribonucleotides resulting in 3'-nucleoside monophosphates via 2',3'-cyclophosphate intermediates. This is Ribonuclease from Heyndrickxia coagulans (Weizmannia coagulans).